We begin with the raw amino-acid sequence, 259 residues long: UPF0246 protein Avin_11220 (259 aa).

It belongs to the UPF0246 family.

This Azotobacter vinelandii (strain DJ / ATCC BAA-1303) protein is UPF0246 protein Avin_11220.